The following is a 155-amino-acid chain: Ribosome maturation factor RimP (155 aa).

It belongs to the RimP family.

The protein localises to the cytoplasm. In terms of biological role, required for maturation of 30S ribosomal subunits. This is Ribosome maturation factor RimP from Agathobacter rectalis (strain ATCC 33656 / DSM 3377 / JCM 17463 / KCTC 5835 / VPI 0990) (Eubacterium rectale).